A 133-amino-acid chain; its full sequence is S-protein homolog 21 (133 aa).

A signal peptide spans 1-21 (MKNLSIFLFVVGLCMISDVYG).

Belongs to the plant self-incompatibility (S1) protein family.

Its subcellular location is the secreted. In Arabidopsis thaliana (Mouse-ear cress), this protein is S-protein homolog 21.